The chain runs to 524 residues: Lysine--tRNA ligase (524 aa).

Residues glutamate 431 and glutamate 438 each coordinate Mg(2+).

This sequence belongs to the class-II aminoacyl-tRNA synthetase family. Homodimer. Mg(2+) serves as cofactor.

It is found in the cytoplasm. It catalyses the reaction tRNA(Lys) + L-lysine + ATP = L-lysyl-tRNA(Lys) + AMP + diphosphate. This is Lysine--tRNA ligase (lysS) from Chlamydia muridarum (strain MoPn / Nigg).